The following is a 470-amino-acid chain: UDP-glycosyltransferase 75C1 (470 aa).

Catalysis depends on His16, which acts as the Proton acceptor. Position 16 (His16) interacts with an anthocyanidin. UDP-alpha-D-glucose contacts are provided by Gln347, His362, Trp365, Asn366, Ser367, Glu370, Asp386, and Gln387.

The protein belongs to the UDP-glycosyltransferase family. Expressed in flowers and fruits, especially in pulp, and, at lower levels, in seeds.

Its subcellular location is the cytoplasm. It is found in the nucleus. The catalysed reaction is 2-cis-(+)-abscisate + UDP-alpha-D-glucose = beta-D-glucopyranosyl cis-(+)-abscisate + UDP. It catalyses the reaction (indol-3-yl)acetate + UDP-alpha-D-glucose = 1-O-(indol-3-ylacetyl)-beta-D-glucose + UDP. In terms of biological role, glucosyltransferase acting on both abscisic acid (ABA) and auxin (IAA). Required for ABA-mediated fruit ripening, seed germination, and negative responses to drought. The protein is UDP-glycosyltransferase 75C1 of Solanum lycopersicum (Tomato).